The primary structure comprises 1578 residues: Pentafunctional AROM polypeptide (1578 aa).

Positions 1–384 (MAEPTKIKIL…YEPKASVVPN (384 aa)) are 3-dehydroquinate synthase. NAD(+)-binding positions include 44–46 (DTN), 81–84 (EVSK), 114–116 (GGV), and aspartate 119. Residue arginine 130 coordinates 7-phospho-2-dehydro-3-deoxy-D-arabino-heptonate. 139–140 (TT) serves as a coordination point for NAD(+). 2 residues coordinate 7-phospho-2-dehydro-3-deoxy-D-arabino-heptonate: aspartate 146 and lysine 152. Residue lysine 161 participates in NAD(+) binding. Asparagine 162 is a 7-phospho-2-dehydro-3-deoxy-D-arabino-heptonate binding site. NAD(+) is bound by residues 179 to 182 (FLET) and asparagine 190. Residue glutamate 194 participates in Zn(2+) binding. 7-phospho-2-dehydro-3-deoxy-D-arabino-heptonate contacts are provided by residues 194-197 (EVIK) and lysine 250. Catalysis depends on glutamate 260, which acts as the Proton acceptor; for 3-dehydroquinate synthase activity. Residues 264–268 (RNLLN) and histidine 271 contribute to the 7-phospho-2-dehydro-3-deoxy-D-arabino-heptonate site. Histidine 271 serves as a coordination point for Zn(2+). Residue histidine 275 is the Proton acceptor; for 3-dehydroquinate synthase activity of the active site. 7-phospho-2-dehydro-3-deoxy-D-arabino-heptonate is bound by residues histidine 287 and lysine 356. Histidine 287 serves as a coordination point for Zn(2+). Positions 397–842 (VHPGVEPASN…WDTLRQKFSA (446 aa)) are EPSP synthase. Cysteine 824 (for EPSP synthase activity) is an active-site residue. A shikimate kinase region spans residues 864-1055 (TASVFIIGMR…KRKKHSFFVS (192 aa)). Residue 871–878 (GMRGAGKT) coordinates ATP. The 3-dehydroquinase stretch occupies residues 1056–1276 (LTLPDLRTAG…AAPGQLSATE (221 aa)). Histidine 1179 serves as the catalytic Proton acceptor; for 3-dehydroquinate dehydratase activity. Catalysis depends on lysine 1207, which acts as the Schiff-base intermediate with substrate; for 3-dehydroquinate dehydratase activity. Positions 1289–1578 (QKKFAVFGTP…EDARAAVLSS (290 aa)) are shikimate dehydrogenase.

It in the N-terminal section; belongs to the sugar phosphate cyclases superfamily. Dehydroquinate synthase family. In the 2nd section; belongs to the EPSP synthase family. The protein in the 3rd section; belongs to the shikimate kinase family. This sequence in the 4th section; belongs to the type-I 3-dehydroquinase family. It in the C-terminal section; belongs to the shikimate dehydrogenase family. In terms of assembly, homodimer. Zn(2+) is required as a cofactor.

It localises to the cytoplasm. It catalyses the reaction 7-phospho-2-dehydro-3-deoxy-D-arabino-heptonate = 3-dehydroquinate + phosphate. It carries out the reaction 3-dehydroquinate = 3-dehydroshikimate + H2O. The catalysed reaction is shikimate + NADP(+) = 3-dehydroshikimate + NADPH + H(+). The enzyme catalyses shikimate + ATP = 3-phosphoshikimate + ADP + H(+). It catalyses the reaction 3-phosphoshikimate + phosphoenolpyruvate = 5-O-(1-carboxyvinyl)-3-phosphoshikimate + phosphate. It participates in metabolic intermediate biosynthesis; chorismate biosynthesis; chorismate from D-erythrose 4-phosphate and phosphoenolpyruvate: step 2/7. Its pathway is metabolic intermediate biosynthesis; chorismate biosynthesis; chorismate from D-erythrose 4-phosphate and phosphoenolpyruvate: step 3/7. It functions in the pathway metabolic intermediate biosynthesis; chorismate biosynthesis; chorismate from D-erythrose 4-phosphate and phosphoenolpyruvate: step 4/7. The protein operates within metabolic intermediate biosynthesis; chorismate biosynthesis; chorismate from D-erythrose 4-phosphate and phosphoenolpyruvate: step 5/7. It participates in metabolic intermediate biosynthesis; chorismate biosynthesis; chorismate from D-erythrose 4-phosphate and phosphoenolpyruvate: step 6/7. Functionally, the AROM polypeptide catalyzes 5 consecutive enzymatic reactions in prechorismate polyaromatic amino acid biosynthesis. The polypeptide is Pentafunctional AROM polypeptide (Aspergillus flavus (strain ATCC 200026 / FGSC A1120 / IAM 13836 / NRRL 3357 / JCM 12722 / SRRC 167)).